Here is a 323-residue protein sequence, read N- to C-terminus: Mitochondrial glutamate carrier 1 (323 aa).

3 Solcar repeats span residues 6–93 (ISLP…FRHQ), 101–214 (LTLL…LNQL), and 223–312 (SPFY…GIAE). A run of 6 helical transmembrane segments spans residues 12–32 (LING…IDLA), 62–82 (YFGM…EKAI), 107–127 (MLAG…MEML), 189–209 (GLGA…PLFA), 223–243 (SPFY…AVAV), and 292–312 (ALVI…GIAE).

This sequence belongs to the mitochondrial carrier (TC 2.A.29) family. In terms of tissue distribution, expressed at high levels in brain, liver, and pancreas.

It is found in the mitochondrion inner membrane. The enzyme catalyses L-glutamate(in) + H(+)(in) = L-glutamate(out) + H(+)(out). Its function is as follows. Mitochondrial glutamate/H(+) symporter. Responsible for the transport of glutamate from the cytosol into the mitochondrial matrix with the concomitant import of a proton. Plays a role in the control of glucose-stimulated insulin secretion. This is Mitochondrial glutamate carrier 1 from Homo sapiens (Human).